Here is a 657-residue protein sequence, read N- to C-terminus: Protein kinase and PP2C-like domain-containing protein (657 aa).

Residues 32 to 327 form the Protein kinase domain; the sequence is FSLLSPIAKG…LKIIEKHIAV (296 aa). ATP contacts are provided by residues 38-46 and lysine 59; that span reads IAKGSESTV. Aspartate 156 serves as the catalytic Proton acceptor; for kinase activity. The PPM-type phosphatase domain maps to 390 to 647; that stretch reads SWGSFATCGR…DNITVIVVFL (258 aa). Residues aspartate 426, glycine 427, aspartate 598, and aspartate 638 each coordinate Mn(2+).

In the N-terminal section; belongs to the protein kinase superfamily. Ser/Thr protein kinase family. This sequence in the C-terminal section; belongs to the PP2C family. The cofactor is Mg(2+). Requires Mn(2+) as cofactor.

The enzyme catalyses L-seryl-[protein] + ATP = O-phospho-L-seryl-[protein] + ADP + H(+). It carries out the reaction L-threonyl-[protein] + ATP = O-phospho-L-threonyl-[protein] + ADP + H(+). It catalyses the reaction O-phospho-L-seryl-[protein] + H2O = L-seryl-[protein] + phosphate. The catalysed reaction is O-phospho-L-threonyl-[protein] + H2O = L-threonyl-[protein] + phosphate. This Oryza sativa subsp. japonica (Rice) protein is Protein kinase and PP2C-like domain-containing protein.